The following is a 96-amino-acid chain: Copper-sensing transcriptional repressor RicR (96 aa).

T2 carries the N-acetylthreonine modification. Cu cation contacts are provided by C38, H63, and C67.

This sequence belongs to the CsoR family.

The protein localises to the cytoplasm. Under low copper conditions, represses the expression of lpqS, Rv2963, mymT, socA, socB, mmcO and its own expression. In the presence of copper, RicR dissociates from DNA, leading to the expression of the target genes. Members of the RicR regulon are important for copper resistance during infections and full virulence in a mouse model of infection. This Mycobacterium tuberculosis (strain ATCC 25618 / H37Rv) protein is Copper-sensing transcriptional repressor RicR.